The chain runs to 268 residues: Lectin ESA-2 (268 aa).

4 consecutive repeat copies span residues 1–67 (GRYT…RRGE), 68–135 (SNVY…QSGG), 136–202 (DTYN…LSGA), and 203–268 (NNYS…VATS). The tract at residues 1 to 268 (GRYTVQNQWG…PIGFKGVATS (268 aa)) is 4 X approximate tandem repeats.

As to quaternary structure, monomer.

Lectin specific for high mannose N-glycans, recognizes the branched moiety of these glycans. Does not recognize other types of N-glycans or monosaccharides. Agglutinates trypsin-treated sheep and rabbit erythrocytes and untreated sheep erythrocytes. Has mitogenic activity on mouse lymphocytes. Does not require metal ions for activity. The protein is Lectin ESA-2 of Eucheuma serra (Marine red alga).